Consider the following 209-residue polypeptide: Mitochondrial import inner membrane translocase subunit Tim23 (209 aa).

3 consecutive transmembrane segments (helical) span residues 73–93 (FELAFFTIGGCCMSGAAFGAV), 125–145 (ALWANTLGSLALLYSAFGVII), and 180–200 (GGLAGLALTSAFALYNNWEHI).

Belongs to the Tim17/Tim22/Tim23 family. In terms of assembly, component of the TIM23 complex at least composed of timm23, timm17 and timm50. The complex interacts with the timm44 component of the PAM complex.

Its subcellular location is the mitochondrion inner membrane. Its function is as follows. Essential component of the TIM23 complex, a complex that mediates the translocation of transit peptide-containing proteins across the mitochondrial inner membrane. This Xenopus tropicalis (Western clawed frog) protein is Mitochondrial import inner membrane translocase subunit Tim23 (timm23).